Consider the following 569-residue polypeptide: Carotenoid cleavage dioxygenase 8 homolog B, chloroplastic (569 aa).

A chloroplast-targeting transit peptide spans 1–43 (MSPAMLQASSLCVSAALSGAASRPGRLASQGHQGKRAVAQPLA). Positions 23–81 (RPGRLASQGHQGKRAVAQPLAASAVTEAAPPAPVVAPPARPVDAPRRRGGRGGGGGGGE) are disordered. Positions 52–62 (PPAPVVAPPAR) are enriched in pro residues. 4 residues coordinate Fe cation: H251, H301, H368, and H558.

Belongs to the carotenoid oxygenase family. Fe(2+) serves as cofactor. As to expression, expressed in parenchyma cells of the root stele, shoot apex, leaf buds, xylem parenchyma cells of the stem, inflorescences and panicles.

The protein resides in the plastid. It localises to the chloroplast. The enzyme catalyses 9-cis-10'-apo-beta-carotenal + 2 O2 = (2E,4E,6E)-7-hydroxy-4-methylhepta-2,4,6-trienal + (11R)-carlactone. The catalysed reaction is all-trans-10'-apo-beta-carotenal + O2 = (2E,4E,6E)-4-methylocta-2,4,6-trienedial + 13-apo-beta-carotenone. Involved in strigolactones biosynthesis by cleaving the C(27) 9-cis-10'-apo-beta-carotenal produced by CCD7. Produces the C(19) carlactone and a C(8) hydroxyaldehyde. Also shows lower activity with all-trans-10'-apo-beta-carotenal producing a C(9) dialdehyde and the C(18) 13-apo-beta-carotenone. Strigolactones are hormones that inhibit tillering and shoot branching through the MAX-dependent pathway, contribute to the regulation of shoot architectural response to phosphate-limiting conditions and function as rhizosphere signal that stimulates hyphal branching of arbuscular mycorrhizal fungi and trigger seed germination of root parasitic weeds. This Oryza sativa subsp. japonica (Rice) protein is Carotenoid cleavage dioxygenase 8 homolog B, chloroplastic (CCD8B).